Consider the following 519-residue polypeptide: 6-phosphofructo-2-kinase/fructose-2,6-bisphosphatase 2 (519 aa).

Polar residues predominate over residues 1–17 (MSENSTFSTEDSCNSSY). A disordered region spans residues 1–22 (MSENSTFSTEDSCNSSYKPHAS). N-acetylserine is present on S2. A 6-phosphofructo-2-kinase region spans residues 2–251 (SENSTFSTED…VYYLMNIHVH (250 aa)). S32 bears the Phosphoserine; by PKA mark. Position 48–56 (48–56 (GLPARGKTY)) interacts with ATP. Beta-D-fructose 6-phosphate-binding residues include R81 and R105. D131 is an active-site residue. Residues T133 and R139 each coordinate beta-D-fructose 6-phosphate. The active site involves C161. ATP is bound at residue 170–175 (NILEVK). K175, R196, and Y200 together coordinate beta-D-fructose 6-phosphate. The segment at 252–519 (PRTIYLCRHG…PKTQVSIPVV (268 aa)) is fructose-2,6-bisphosphatase. Residue R259 participates in beta-D-fructose 2,6-bisphosphate binding. H260 serves as the catalytic Tele-phosphohistidine intermediate. Beta-D-fructose 2,6-bisphosphate-binding residues include N266 and G272. Catalysis depends on E329, which acts as the Proton donor/acceptor. Residues Y340, R354, K358, Y369, Q395, and R399 each contribute to the beta-D-fructose 2,6-bisphosphate site. 351–354 (FALR) provides a ligand contact to ATP. Residues 395–399 (QAVMR) and Y431 contribute to the ATP site. The disordered stretch occupies residues 448–493 (HRDKPTHNFPKSQTPVRMRRNSFTPLSSSNTIRRPRNYSVGSRPLK). The span at 456–479 (FPKSQTPVRMRRNSFTPLSSSNTI) shows a compositional bias: polar residues. Residue S469 is modified to Phosphoserine. T471 is subject to Phosphothreonine. T478 is subject to Phosphothreonine; by PKC. S486 and S496 each carry phosphoserine. Residues 500-519 (ALDMQEGADQPKTQVSIPVV) are disordered. Residues 510 to 519 (PKTQVSIPVV) are compositionally biased toward polar residues.

The protein in the C-terminal section; belongs to the phosphoglycerate mutase family. Homodimer. Forms a heterodimer with PFKFB3. Post-translationally, phosphorylation by AMPK stimulates activity. In terms of tissue distribution, highest levels in kidney; also found in heart, brain, spleen, lung, liver, skeletal muscle and testis.

It catalyses the reaction beta-D-fructose 2,6-bisphosphate + H2O = beta-D-fructose 6-phosphate + phosphate. The enzyme catalyses beta-D-fructose 6-phosphate + ATP = beta-D-fructose 2,6-bisphosphate + ADP + H(+). Phosphorylation results in the activation of the kinase activity. Synthesis and degradation of fructose 2,6-bisphosphate. This Mus musculus (Mouse) protein is 6-phosphofructo-2-kinase/fructose-2,6-bisphosphatase 2 (Pfkfb2).